We begin with the raw amino-acid sequence, 227 residues long: A-type potassium channel modulatory protein KCNIP1 (227 aa).

An EF-hand 1; degenerate domain is found at leucine 38–proline 94. 3 EF-hand domains span residues aspartate 97–glycine 132, threonine 133–methionine 168, and threonine 181–isoleucine 216. Ca(2+) is bound by residues aspartate 146, asparagine 148, aspartate 150, tyrosine 152, glutamate 157, aspartate 194, asparagine 196, aspartate 198, and glutamate 205. Residues aspartate 214–methionine 227 are interaction with KCND2.

Belongs to the recoverin family. As to quaternary structure, component of heteromultimeric potassium channels. Identified in potassium channel complexes containing KCND1, KCND2, KCND3, KCNIP1, KCNIP2, KCNIP3, KCNIP4, DPP6 and DPP10. Part of a heterooctamer composed of the tetrameric channel and four KCNIP1 chains. Probably part of a complex consisting of KCNIP1, KCNIP2 isoform 3 and KCND2. Self-associates to form homodimers and homotetramers. Interacts with KCNIP2 isoform 3 in a calcium-dependent manner. Interacts with KCND2; this interaction mediates the capture of both the N- and C-terminus of KCND2, thus preventing KCND2 N-type inactivation and modulates the channel gating kinetics. Interacts with KCND3; each KCNIP1 monomer interacts with two adjacent KCND3 subunits, through both the N-terminal inactivation ball of a KCND3 subunit and a C-terminal helix from the adjacent KCND3 subunit, clamping them together; this interaction stabilizes the tetrameric form and modulates the channel gating kinetics namely channel activation and inactivation kinetics and rate of recovery from inactivation. As to expression, detected in hippocampus and in the molecular layer of the dentate gyrus (at protein level). Isoform 1 and isoform 2 are predominantly expressed at equal levels in brain. Colocalizes with KCND3 in inhibitory interneurons in cortex and hippocampus and in striatal interneurons.

It localises to the cell membrane. The protein resides in the cytoplasm. The protein localises to the cell projection. Its subcellular location is the dendrite. Its function is as follows. Regulatory subunit of Kv4/D (Shal)-type voltage-gated rapidly inactivating A-type potassium channels. Regulates channel density, inactivation kinetics and rate of recovery from inactivation in a calcium-dependent and isoform-specific manner. Modulates KCND2/Kv4.2 currents. In vitro, modulates KCND1/Kv4.1 currents. Increases the presence of KCND2 at the cell surface. This Rattus norvegicus (Rat) protein is A-type potassium channel modulatory protein KCNIP1.